The primary structure comprises 109 residues: UPF0122 protein BH2485 (109 aa).

The protein belongs to the UPF0122 family.

In terms of biological role, might take part in the signal recognition particle (SRP) pathway. This is inferred from the conservation of its genetic proximity to ftsY/ffh. May be a regulatory protein. The sequence is that of UPF0122 protein BH2485 from Halalkalibacterium halodurans (strain ATCC BAA-125 / DSM 18197 / FERM 7344 / JCM 9153 / C-125) (Bacillus halodurans).